The following is a 152-amino-acid chain: RxLR effector protein Avrblb1 (152 aa).

The N-terminal stretch at 1 to 24 (MRSLLLTVLLNLVVLLATTGAVSS) is a signal peptide. The RxLR-dEER signature appears at 51-72 (RSLRGDYNNEVTKEPNTSDEER). Residues 54 to 56 (RGD) carry the RGD RLK-binding motif motif. Residue asparagine 66 is glycosylated (N-linked (GlcNAc...) asparagine). The w motif stretch occupies residues 99-152 (QSKTVLRYEDKLFTALYKSGETPRSLRTKHLDKASASVFFNRFKKWYDKNVGPS).

This sequence belongs to the RxLR effector family. In terms of assembly, interacts with host defense protein RGA2/Rpi-blb1. Interacts with host legume-type lectin receptor kinase LECRK19.

It localises to the secreted. Its subcellular location is the host nucleus. The protein localises to the host nucleolus. It is found in the host cell membrane. Functionally, secreted effector that acts as an elicitor of hypersensitive response (HR) specifically on plants carrying defense protein RGA2/Rpi-blb1. Enhances P.infestans colonization of plant hosts Nicotiana benthamiana and potato Solanum bulbocastanum leaves. Associates with host legume-type lectin receptor kinases and disrupts attachments between the host plasma membrane and cell wall. The protein is RxLR effector protein Avrblb1 of Phytophthora infestans (strain T30-4) (Potato late blight agent).